We begin with the raw amino-acid sequence, 675 residues long: Glycerophosphocholine phosphodiesterase GPCPD1 (675 aa).

The region spanning 1 to 115 is the CBM20 domain; it reads MTPSQVTFEI…IIIDDGQFGI (115 aa). Substrate is bound by residues R70 and 88 to 89; that span reads HK. Phosphoserine occurs at positions 178 and 427. The 301-residue stretch at 321-621 folds into the GP-PDE domain; it reads PLDVGHRGAG…DRIYDWMPEQ (301 aa). Y611 is modified (phosphotyrosine).

The protein belongs to the glycerophosphoryl diester phosphodiesterase family. In terms of tissue distribution, widely expressed with highest levels in skeletal muscle and heart.

It is found in the cytoplasm. The protein localises to the cytosol. The catalysed reaction is sn-glycerol 3-phosphocholine + H2O = sn-glycerol 3-phosphate + choline + H(+). Functionally, may be involved in the negative regulation of skeletal muscle differentiation, independently of its glycerophosphocholine phosphodiesterase activity. The sequence is that of Glycerophosphocholine phosphodiesterase GPCPD1 (Gpcpd1) from Mus musculus (Mouse).